A 62-amino-acid chain; its full sequence is UPF0337 protein XAC0100 (62 aa).

Belongs to the UPF0337 (CsbD) family.

This Xanthomonas axonopodis pv. citri (strain 306) protein is UPF0337 protein XAC0100.